The chain runs to 287 residues: Phosphatidylserine decarboxylase proenzyme (287 aa).

Active-site charge relay system; for autoendoproteolytic cleavage activity residues include Asp90, His147, and Ser252. Ser252 acts as the Schiff-base intermediate with substrate; via pyruvic acid; for decarboxylase activity in catalysis. Ser252 carries the pyruvic acid (Ser); by autocatalysis modification.

This sequence belongs to the phosphatidylserine decarboxylase family. PSD-B subfamily. Prokaryotic type I sub-subfamily. Heterodimer of a large membrane-associated beta subunit and a small pyruvoyl-containing alpha subunit. It depends on pyruvate as a cofactor. In terms of processing, is synthesized initially as an inactive proenzyme. Formation of the active enzyme involves a self-maturation process in which the active site pyruvoyl group is generated from an internal serine residue via an autocatalytic post-translational modification. Two non-identical subunits are generated from the proenzyme in this reaction, and the pyruvate is formed at the N-terminus of the alpha chain, which is derived from the carboxyl end of the proenzyme. The autoendoproteolytic cleavage occurs by a canonical serine protease mechanism, in which the side chain hydroxyl group of the serine supplies its oxygen atom to form the C-terminus of the beta chain, while the remainder of the serine residue undergoes an oxidative deamination to produce ammonia and the pyruvoyl prosthetic group on the alpha chain. During this reaction, the Ser that is part of the protease active site of the proenzyme becomes the pyruvoyl prosthetic group, which constitutes an essential element of the active site of the mature decarboxylase.

It is found in the cell membrane. The enzyme catalyses a 1,2-diacyl-sn-glycero-3-phospho-L-serine + H(+) = a 1,2-diacyl-sn-glycero-3-phosphoethanolamine + CO2. It participates in phospholipid metabolism; phosphatidylethanolamine biosynthesis; phosphatidylethanolamine from CDP-diacylglycerol: step 2/2. In terms of biological role, catalyzes the formation of phosphatidylethanolamine (PtdEtn) from phosphatidylserine (PtdSer). This chain is Phosphatidylserine decarboxylase proenzyme, found in Pseudomonas putida (strain W619).